Reading from the N-terminus, the 256-residue chain is Thiazole synthase (256 aa).

The active-site Schiff-base intermediate with DXP is Lys-98. Residues Gly-159, 185 to 186, and 207 to 208 each bind 1-deoxy-D-xylulose 5-phosphate; these read AG and NT.

It belongs to the ThiG family. Homotetramer. Forms heterodimers with either ThiH or ThiS.

Its subcellular location is the cytoplasm. It carries out the reaction [ThiS sulfur-carrier protein]-C-terminal-Gly-aminoethanethioate + 2-iminoacetate + 1-deoxy-D-xylulose 5-phosphate = [ThiS sulfur-carrier protein]-C-terminal Gly-Gly + 2-[(2R,5Z)-2-carboxy-4-methylthiazol-5(2H)-ylidene]ethyl phosphate + 2 H2O + H(+). The protein operates within cofactor biosynthesis; thiamine diphosphate biosynthesis. In terms of biological role, catalyzes the rearrangement of 1-deoxy-D-xylulose 5-phosphate (DXP) to produce the thiazole phosphate moiety of thiamine. Sulfur is provided by the thiocarboxylate moiety of the carrier protein ThiS. In vitro, sulfur can be provided by H(2)S. This is Thiazole synthase from Aliivibrio salmonicida (strain LFI1238) (Vibrio salmonicida (strain LFI1238)).